Reading from the N-terminus, the 178-residue chain is Stage V sporulation protein T (178 aa).

In terms of domain architecture, SpoVT-AbrB spans 5–51 (GIVRRIDDLGRVVIPKEIRRTLRIREGDPLEIFVDRDGEVILKKYSP). Positions 56 to 178 (GDFAKEYADA…AGFLARQMEQ (123 aa)) are GAF-like.

It to B.subtilis AbrB and Abh. In terms of assembly, homotetramer. Two monomers dimerize via their N-terminal swapped-hairpin domains. These dimers further associate into tetramers through helical interactions between their C-terminal GAF-like domains.

Its function is as follows. Transcriptional factor that positively regulates or negatively the expression of a large number of forespore-specific sigma G-dependent genes. May provide a mechanism of feedback control that is important for forespore development. SpoVT levels during spore formation have a major impact on the germination and the resistance of the resultant spores. In Bacillus subtilis (strain 168), this protein is Stage V sporulation protein T.